A 354-amino-acid polypeptide reads, in one-letter code: Hyaluronan and proteoglycan link protein 1 (354 aa).

Residues 1–9 (MRSLLFLVL) constitute a propeptide that is removed on maturation. Residues 38–152 (PRLLVEAEQA…EGLEDDTAVV (115 aa)) form the Ig-like V-type domain. N-linked (GlcNAc...) asparagine glycosylation is present at asparagine 56. 5 cysteine pairs are disulfide-bonded: cysteine 61/cysteine 139, cysteine 181/cysteine 252, cysteine 205/cysteine 226, cysteine 279/cysteine 349, and cysteine 304/cysteine 325. 2 Link domains span residues 159–254 (VVFP…FCFT) and 259–351 (GRFY…YCFR).

Belongs to the HAPLN family.

The protein resides in the secreted. It localises to the extracellular space. Its subcellular location is the extracellular matrix. Stabilizes the aggregates of proteoglycan monomers with hyaluronic acid in the extracellular cartilage matrix. This is Hyaluronan and proteoglycan link protein 1 (Hapln1) from Rattus norvegicus (Rat).